The primary structure comprises 414 residues: Particulate methane monooxygenase alpha subunit (414 aa).

A signal peptide spans 1–32; that stretch reads MKTIKDRIAKWSAIGLLSAVAATAFYAPSASA. 5 residues coordinate Cu cation: His33, His48, His72, His137, and His139. The cupredoxin domain used to construct soluble pmoB (spmoB) stretch occupies residues 33 to 172; sequence HGEKSQAAFM…MSEFRNPVTT (140 aa). Transmembrane regions (helical) follow at residues 186–206 and 235–255; these read GNTY…IGYW and VAMG…SSAN. The segment at 265–414 is cupredoxin domain used to construct soluble pmoB (spmoB); the sequence is QAGTMRGMKP…IDAPLIPSFM (150 aa).

M.capsulatus has two forms of methane monooxygenase, a soluble (sMMO) and a membrane-bound (particulate) type (pMMO). The particulate type is a nonamer composed of three alpha:beta:gamma heterotrimeric protomers assembled into a cylindrical structure; the beta and gamma subunits comprise the bulk of the membrane-spanning regions and the soluble regions are derived primarily from alpha subunits which form two antiparallel beta-barrel-like structures each. This assembly, also called pMMO hydroxylase (pMMO-H), is proposed to associate with methanol dehydrogenase (MDH), also designated as pMMO-R, to form the pMMO-C complex which seems to have greater methane monooxygenase activity. Requires Cu(2+) as cofactor.

It is found in the membrane. It carries out the reaction methane + a quinol + O2 = methanol + a quinone + H2O. Methane monooxygenase is responsible for the initial oxygenation of methane to methanol in methanotrophs. At least in vitro, specific quinols can replace NADH as reductants. This chain is Particulate methane monooxygenase alpha subunit (pmoB1), found in Methylococcus capsulatus (strain ATCC 33009 / NCIMB 11132 / Bath).